The sequence spans 186 residues: Large ribosomal subunit protein uL5 (186 aa).

Belongs to the universal ribosomal protein uL5 family. As to quaternary structure, part of the 50S ribosomal subunit; part of the 5S rRNA/L5/L18/L25 subcomplex. Contacts the 5S rRNA and the P site tRNA. Forms a bridge to the 30S subunit in the 70S ribosome.

In terms of biological role, this is one of the proteins that bind and probably mediate the attachment of the 5S RNA into the large ribosomal subunit, where it forms part of the central protuberance. In the 70S ribosome it contacts protein S13 of the 30S subunit (bridge B1b), connecting the 2 subunits; this bridge is implicated in subunit movement. Contacts the P site tRNA; the 5S rRNA and some of its associated proteins might help stabilize positioning of ribosome-bound tRNAs. The chain is Large ribosomal subunit protein uL5 from Jannaschia sp. (strain CCS1).